Reading from the N-terminus, the 909-residue chain is Protein translocase subunit SecA (909 aa).

ATP is bound by residues Q87, 105-109 (GEGKT), and D507. The segment at 834 to 909 (EAVEEQRRRQ…KYKQCCGKLS (76 aa)) is disordered. The segment covering 837–848 (EEQRRRQGDMQY) has biased composition (basic and acidic residues). The segment covering 859–871 (QGAGGEGAAGGTA) has biased composition (gly residues). Positions 893, 895, 904, and 905 each coordinate Zn(2+).

The protein belongs to the SecA family. Monomer and homodimer. Part of the essential Sec protein translocation apparatus which comprises SecA, SecYEG and auxiliary proteins SecDF-YajC and YidC. Zn(2+) serves as cofactor.

The protein localises to the cell inner membrane. It localises to the cytoplasm. It carries out the reaction ATP + H2O + cellular proteinSide 1 = ADP + phosphate + cellular proteinSide 2.. Its function is as follows. Part of the Sec protein translocase complex. Interacts with the SecYEG preprotein conducting channel. Has a central role in coupling the hydrolysis of ATP to the transfer of proteins into and across the cell membrane, serving both as a receptor for the preprotein-SecB complex and as an ATP-driven molecular motor driving the stepwise translocation of polypeptide chains across the membrane. In Alkalilimnicola ehrlichii (strain ATCC BAA-1101 / DSM 17681 / MLHE-1), this protein is Protein translocase subunit SecA.